The chain runs to 176 residues: Macro domain-containing protein LMOf2365_2748 (176 aa).

A Macro domain is found at 1-175 (MEITVVKGDI…LYNKLINSEV (175 aa)).

It belongs to the MacroD-type family.

The chain is Macro domain-containing protein LMOf2365_2748 from Listeria monocytogenes serotype 4b (strain F2365).